We begin with the raw amino-acid sequence, 348 residues long: Endoplasmic reticulum junction formation protein lunapark-A (348 aa).

The Cytoplasmic segment spans residues 1 to 43 (MSVFCLQAKPTTVEILEGIDKDIQILEDYSVKYQRQMKAVVGR). Residues 44 to 64 (LLLYSILLYLMAGVVVYSWYL) form a helical membrane-spanning segment. Topologically, residues 65-67 (PEQ) are lumenal. Residues 68-88 (LMGRLVLGLPFLLFPLLVWIL) traverse the membrane as a helical segment. Topologically, residues 89–348 (RKVLILFFAR…EEDKQSDSGD (260 aa)) are cytoplasmic. Residues 105 to 126 (FKLEDLKAQKRKILEDVMETET) are a coiled coil. Positions 142 to 211 (KKKTDFDSTP…HSAPGGPPER (70 aa)) are disordered. Residues 277–302 (CQQCLSHNGMALKEEFEYVAFRCAYC) form a C4-type; plays a role in ER morphology zinc finger. A disordered region spans residues 313–348 (PQAPRLPETAGEPKLPCDLNSSSCAAEEDKQSDSGD). Positions 339–348 (EEDKQSDSGD) are enriched in basic and acidic residues.

This sequence belongs to the lunapark family. In terms of assembly, homodimer; homodimerization requires the C4-type zinc finger motif and decreases during mitosis in a phosphorylation-dependent manner. In terms of processing, phosphorylated. Phosphorylation occurs during interphase. Phosphorylation also occurs during mitosis; these phosphorylations reduce both its homodimerization and the ER three-way tubular junction formation.

The protein localises to the endoplasmic reticulum membrane. Its function is as follows. Endoplasmic reticulum (ER)-shaping membrane protein that plays a role in determining ER morphology. Involved in the stabilization of nascent three-way ER tubular junctions within the ER network. May also play a role as a curvature-stabilizing protein within three-way ER tubular junction network. The protein is Endoplasmic reticulum junction formation protein lunapark-A (lnpka) of Takifugu rubripes (Japanese pufferfish).